We begin with the raw amino-acid sequence, 518 residues long: Zinc finger protein 449 (518 aa).

The SCAN box domain occupies 30-112 (RQRFRQFQYR…SLIEDLQREL (83 aa)). Polar residues predominate over residues 292–304 (NPTLGETPENSNL). Positions 292 to 325 (NPTLGETPENSNLEEPLNPKPHKKKSPGEKPHRC) are disordered. C2H2-type zinc fingers lie at residues 323–345 (HRCP…QRIH), 351–373 (HKCP…QRLH), 379–401 (YECT…QRTH), 407–429 (YKCL…LKTH), 435–457 (HRCH…QRTH), 463–485 (FKCN…LRIH), and 491–513 (YKCT…QVTH).

Belongs to the krueppel C2H2-type zinc-finger protein family.

Its subcellular location is the nucleus. Its function is as follows. May be involved in transcriptional regulation. The protein is Zinc finger protein 449 (ZNF449) of Pan troglodytes (Chimpanzee).